The sequence spans 615 residues: Medium-chain acyl-CoA ligase ACSF2, mitochondrial (615 aa).

The transit peptide at 1-41 directs the protein to the mitochondrion; that stretch reads MAVYVGMLRLGRLCAGSSGVLGARAALSRSWQEARLQGVRF. N6-acetyllysine is present on Lys-179. Lys-182 bears the N6-acetyllysine; alternate mark. Lys-182 carries the post-translational modification N6-succinyllysine; alternate. 263-271 contributes to the ATP binding site; it reads TSGTTGSPK. N6-acetyllysine is present on residues Lys-340 and Lys-398. Lys-478 carries the post-translational modification N6-succinyllysine. 2 residues coordinate ATP: Asp-493 and Arg-508. Lys-510 is modified (N6-acetyllysine). An N6-acetyllysine; alternate mark is found at Lys-544 and Lys-570. 2 positions are modified to N6-succinyllysine; alternate: Lys-544 and Lys-570. Lys-599 provides a ligand contact to ATP. Residue Lys-599 is modified to N6-succinyllysine.

The protein belongs to the ATP-dependent AMP-binding enzyme family.

The protein resides in the mitochondrion. The catalysed reaction is a medium-chain fatty acid + ATP + CoA = a medium-chain fatty acyl-CoA + AMP + diphosphate. It carries out the reaction octanoate + ATP + CoA = octanoyl-CoA + AMP + diphosphate. In terms of biological role, acyl-CoA synthases catalyze the initial reaction in fatty acid metabolism, by forming a thioester with CoA. Has some preference toward medium-chain substrates. Plays a role in adipocyte differentiation. This chain is Medium-chain acyl-CoA ligase ACSF2, mitochondrial, found in Homo sapiens (Human).